Here is a 158-residue protein sequence, read N- to C-terminus: Non-secretory ribonuclease (158 aa).

Positions 1–27 (MVPKLFTSQICLLLLLGLSSLEVSLHA) are cleaved as a signal peptide. Residue Trp-34 is glycosylated (C-linked (Man) tryptophan). Residue His-42 is the Proton acceptor of the active site. Tyr-60 bears the 3'-nitrotyrosine mark. 65 to 69 (KNRNT) is a binding site for substrate. N-linked (GlcNAc...) asparagine glycans are attached at residues Asn-86, Asn-92, and Asn-111. The active-site Proton donor is His-153.

Belongs to the pancreatic ribonuclease family. In terms of assembly, interacts with and forms a tight 1:1 complex with RNH1. Dimerization of two such complexes may occur.

The protein localises to the lysosome. The protein resides in the cytoplasmic granule. It catalyses the reaction an [RNA] containing cytidine + H2O = an [RNA]-3'-cytidine-3'-phosphate + a 5'-hydroxy-ribonucleotide-3'-[RNA].. It carries out the reaction an [RNA] containing uridine + H2O = an [RNA]-3'-uridine-3'-phosphate + a 5'-hydroxy-ribonucleotide-3'-[RNA].. This is a non-secretory ribonuclease. It is a pyrimidine specific nuclease with a slight preference for U. Cytotoxin and helminthotoxin. Possesses a wide variety of biological activities. The sequence is that of Non-secretory ribonuclease (RNASE2) from Saguinus labiatus (Red-chested mustached tamarin).